Reading from the N-terminus, the 254-residue chain is N-acetylglucosamine-induced protein 1 (254 aa).

The protein localises to the cytoplasm. Functionally, N-acetylglucosamine-induced protein which plays a role in the N-acetylglucosamine metabolic pathway. This chain is N-acetylglucosamine-induced protein 1, found in Candida albicans (strain SC5314 / ATCC MYA-2876) (Yeast).